Reading from the N-terminus, the 227-residue chain is tRNA (guanine-N(1)-)-methyltransferase (227 aa).

Residues Gly112 and 132 to 137 (IGDFIL) each bind S-adenosyl-L-methionine.

It belongs to the RNA methyltransferase TrmD family. In terms of assembly, homodimer.

It is found in the cytoplasm. It carries out the reaction guanosine(37) in tRNA + S-adenosyl-L-methionine = N(1)-methylguanosine(37) in tRNA + S-adenosyl-L-homocysteine + H(+). In terms of biological role, specifically methylates guanosine-37 in various tRNAs. This is tRNA (guanine-N(1)-)-methyltransferase from Sulfurovum sp. (strain NBC37-1).